The sequence spans 930 residues: uncharacterized protein (930 aa).

Residues 434-441 (IRRGISRK) carry the Nuclear localization signal motif.

Its subcellular location is the nucleus. This is an uncharacterized protein from Chaetomium thermophilum (strain DSM 1495 / CBS 144.50 / IMI 039719) (Thermochaetoides thermophila).